Here is a 254-residue protein sequence, read N- to C-terminus: Cold shock-induced protein TIR1 (254 aa).

Positions 1 to 18 are cleaved as a signal peptide; sequence MAYTKIALFAAIAALASA. The segment at 110-213 is disordered; sequence NGDASSSAAP…SSTGAKTSAI (104 aa). The segment covering 113–197 has biased composition (low complexity); that stretch reads ASSSAAPSSS…SAAPSSTEAK (85 aa). 10 repeat units span residues 114–119, 120–125, 126–131, 132–137, 138–143, 144–155, 156–167, 168–179, 180–191, and 192–203. Positions 114–143 are 5 X 6 AA approximate tandem repeats, Ala/Ser-rich; that stretch reads SSSAAPSSSAAPTSSAAPSSSAAPTSSAAS. The tract at residues 144–203 is 5 X 12 AA approximate tandem repeats, Ala/Ser-rich; sequence SSSEAKSSSAAPSSSEAKSSSAAPSSSEAKSSSAAPSSSEAKSSSAAPSSTEAKITSAAP. Polar residues predominate over residues 201 to 213; it reads AAPSSTGAKTSAI. The PIR1/2/3 repeat unit spans residues 210–224; sequence TSAISQITDGQIQAT. Asn-233 carries GPI-anchor amidated asparagine lipidation. Residues 234–254 constitute a propeptide, removed in mature form; that stretch reads GAAKAFVGMGAGVVAAAAMLL.

This sequence belongs to the SRP1/TIP1 family. Post-translationally, O-glycosylated. The GPI-anchor is attached to the protein in the endoplasmic reticulum and serves to target the protein to the cell surface. There, the glucosamine-inositol phospholipid moiety is cleaved off and the GPI-modified mannoprotein is covalently attached via its lipidless GPI glycan remnant to the 1,6-beta-glucan of the outer cell wall layer. In terms of processing, covalently linked to beta-1,3-glucan of the inner cell wall layer via an alkali-sensitive ester linkage between the gamma-carboxyl group of glutamic acids, arising from a specific glutamine within the PIR1/2/3 repeat, and hydroxyl groups of glucoses of beta-1,3-glucan chains.

Its subcellular location is the secreted. It localises to the cell wall. The protein localises to the membrane. Its function is as follows. Component of the cell wall. Required for anaerobic growth. In Saccharomyces cerevisiae (strain ATCC 204508 / S288c) (Baker's yeast), this protein is Cold shock-induced protein TIR1 (TIR1).